We begin with the raw amino-acid sequence, 284 residues long: Bifunctional protein FolD (284 aa).

NADP(+)-binding positions include 165 to 167, Ser-190, and Ile-231; that span reads GAS.

The protein belongs to the tetrahydrofolate dehydrogenase/cyclohydrolase family. As to quaternary structure, homodimer.

The catalysed reaction is (6R)-5,10-methylene-5,6,7,8-tetrahydrofolate + NADP(+) = (6R)-5,10-methenyltetrahydrofolate + NADPH. It carries out the reaction (6R)-5,10-methenyltetrahydrofolate + H2O = (6R)-10-formyltetrahydrofolate + H(+). It functions in the pathway one-carbon metabolism; tetrahydrofolate interconversion. Catalyzes the oxidation of 5,10-methylenetetrahydrofolate to 5,10-methenyltetrahydrofolate and then the hydrolysis of 5,10-methenyltetrahydrofolate to 10-formyltetrahydrofolate. The chain is Bifunctional protein FolD from Polynucleobacter necessarius subsp. necessarius (strain STIR1).